A 258-amino-acid chain; its full sequence is Leucine-rich repeat-containing protein 3B (258 aa).

Positions 1–33 are cleaved as a signal peptide; sequence MTPLDLWLSRSIPMCLLLQSLVLMVLCFPSAST. The 35-residue stretch at 34–68 folds into the LRRNT domain; that stretch reads CPKGCTCQRSESPPHGLNVTCSLSRLKEIPPDVPP. The N-linked (GlcNAc...) asparagine glycan is linked to Asn51. LRR repeat units lie at residues 69 to 90, 93 to 114, and 118 to 139; these read DTQL…IFHG, MLRR…AFIG, and SLEV…AFAR. The N-linked (GlcNAc...) asparagine glycan is linked to Asn98. Residues 149–196 form the LRRCT domain; sequence NPWHCDCALQQALGGMAHNHERVLCRSSELRDQEGQPFMAVDADLCNL. Residues 204–224 form a helical membrane-spanning segment; that stretch reads AMLVTMFGWFAMVISYVVYYV.

This sequence belongs to the LRRC3 family.

Its subcellular location is the membrane. The protein is Leucine-rich repeat-containing protein 3B (lrrc3b) of Danio rerio (Zebrafish).